The primary structure comprises 151 residues: UPF0208 membrane protein YfbV (151 aa).

A run of 2 helical transmembrane segments spans residues 46–65 and 69–91; these read FGIR…QIAL and LGPA…WWLG.

The protein belongs to the UPF0208 family.

It is found in the cell inner membrane. The protein is UPF0208 membrane protein YfbV (yfbV) of Photorhabdus temperata.